The primary structure comprises 347 residues: S-adenosylmethionine:tRNA ribosyltransferase-isomerase (347 aa).

This sequence belongs to the QueA family. In terms of assembly, monomer.

It localises to the cytoplasm. The catalysed reaction is 7-aminomethyl-7-carbaguanosine(34) in tRNA + S-adenosyl-L-methionine = epoxyqueuosine(34) in tRNA + adenine + L-methionine + 2 H(+). It functions in the pathway tRNA modification; tRNA-queuosine biosynthesis. Transfers and isomerizes the ribose moiety from AdoMet to the 7-aminomethyl group of 7-deazaguanine (preQ1-tRNA) to give epoxyqueuosine (oQ-tRNA). This is S-adenosylmethionine:tRNA ribosyltransferase-isomerase from Streptococcus thermophilus (strain CNRZ 1066).